The primary structure comprises 274 residues: Cell division protein FtsQ (274 aa).

The disordered stretch occupies residues 1–24 (MRDLHAKKQRVPHNRVKKPPKERK). Topologically, residues 1–33 (MRDLHAKKQRVPHNRVKKPPKERKPINWGPILK) are cytoplasmic. The segment covering 7-21 (KKQRVPHNRVKKPPK) has biased composition (basic residues). The helical transmembrane segment at 34-56 (FASRGFGGAALCAGLGFGGWQLY) threads the bilayer. The Periplasmic segment spans residues 57–274 (NLVSRTTLLR…YADKIIVKKV (218 aa)). The POTRA domain maps to 65–133 (LRLEAIEVSP…HTLSITVSER (69 aa)).

Belongs to the FtsQ/DivIB family. FtsQ subfamily.

It is found in the cell inner membrane. Functionally, essential cell division protein. This is Cell division protein FtsQ from Geobacter sp. (strain M21).